The following is a 479-amino-acid chain: Adenosylhomocysteinase (479 aa).

Thr-56, Asp-134, and Glu-200 together coordinate substrate. 201–203 is an NAD(+) binding site; the sequence is TTT. Substrate-binding residues include Lys-230 and Asp-234. Residues Asn-235, 264 to 269, Glu-287, Asn-322, 343 to 345, and Asn-391 contribute to the NAD(+) site; these read GYGDVG and IGH.

This sequence belongs to the adenosylhomocysteinase family. Homotetramer. Requires NAD(+) as cofactor.

It carries out the reaction S-adenosyl-L-homocysteine + H2O = L-homocysteine + adenosine. Its pathway is amino-acid biosynthesis; L-homocysteine biosynthesis; L-homocysteine from S-adenosyl-L-homocysteine: step 1/1. Functionally, adenosylhomocysteine is a competitive inhibitor of S-adenosyl-L-methionine-dependent methyl transferase reactions; therefore adenosylhomocysteinase may play a key role in the control of methylations via regulation of the intracellular concentration of adenosylhomocysteine. This chain is Adenosylhomocysteinase, found in Plasmodium falciparum (isolate 3D7).